The primary structure comprises 354 residues: Arginase-2, mitochondrial (354 aa).

A mitochondrion-targeting transit peptide spans 1–22; sequence MSYGSCVSRLLRTRVQSVLKKS. Positions 120, 143, 145, and 147 each coordinate Mn(2+). Substrate contacts are provided by residues 145–149, 156–158, and Asp202; these read HADIN and SGN. The Mn(2+) site is built by Asp251 and Asp253. The substrate site is built by Thr265 and Glu296. Residues 330–354 form a disordered region; the sequence is GHTVYEQLPPPSSPHESENAERVRI. Basic and acidic residues predominate over residues 344-354; sequence HESENAERVRI.

The protein belongs to the arginase family. As to quaternary structure, homotrimer. Mn(2+) serves as cofactor.

The protein localises to the mitochondrion. It carries out the reaction L-arginine + H2O = urea + L-ornithine. Its pathway is nitrogen metabolism; urea cycle; L-ornithine and urea from L-arginine: step 1/1. May play a role in the regulation of extra-urea cycle arginine metabolism and also in down-regulation of nitric oxide synthesis. Extrahepatic arginase functions to regulate L-arginine bioavailability to nitric oxid synthase (NOS). Arginine metabolism is a critical regulator of innate and adaptive immune responses. Seems to be involved in negative regulation of the survival capacity of activated T cells. May suppress inflammation-related signaling in asthmatic airway epithelium. May play a role in promoting prenatal immune suppression. Regulates RPS6KB1 signaling, which promotes endothelial cell senescence and inflammation and implicates NOS3/eNOS dysfunction. Can inhibit endothelial autophagy independently of its enzymatic activity implicating mTORC2 signaling. Involved in vascular smooth muscle cell senescence and apoptosis independently of its enzymatic activity. In Oryctolagus cuniculus (Rabbit), this protein is Arginase-2, mitochondrial (ARG2).